The sequence spans 955 residues: Centrosomal protein of 112 kDa (955 aa).

Residues Gln-277–Arg-954 are a coiled coil.

Its subcellular location is the cytoplasm. The protein resides in the cytoskeleton. It localises to the microtubule organizing center. It is found in the centrosome. In Homo sapiens (Human), this protein is Centrosomal protein of 112 kDa (CEP112).